We begin with the raw amino-acid sequence, 275 residues long: Large ribosomal subunit protein uL2 (275 aa).

The segment at 222–275 (GVAMNPVDHPHGGGEGRNKGRHPTSPWGQKSKGLKTRHNKRTDNMIIRRRAKKK) is disordered. Over residues 229–239 (DHPHGGGEGRN) the composition is skewed to basic and acidic residues.

Belongs to the universal ribosomal protein uL2 family. As to quaternary structure, part of the 50S ribosomal subunit. Forms a bridge to the 30S subunit in the 70S ribosome.

Its function is as follows. One of the primary rRNA binding proteins. Required for association of the 30S and 50S subunits to form the 70S ribosome, for tRNA binding and peptide bond formation. It has been suggested to have peptidyltransferase activity; this is somewhat controversial. Makes several contacts with the 16S rRNA in the 70S ribosome. This is Large ribosomal subunit protein uL2 from Psychrobacter cryohalolentis (strain ATCC BAA-1226 / DSM 17306 / VKM B-2378 / K5).